The chain runs to 1379 residues: Attractin-like protein 1 (1379 aa).

The segment at 1–23 is disordered; that stretch reads METGGRARTGTPQPAAPGVWRAR. A signal peptide spans 1 to 52; that stretch reads METGGRARTGTPQPAAPGVWRARPAGGGGGGASSWLLDGNSWLLCYGFLYLA. The region spanning 53 to 91 is the EGF-like 1 domain; the sequence is LYAQVSQSKPCERTGSCFSGRCVNSTCLCDPGWVGDQCQ. Topologically, residues 53–1230 are extracellular; the sequence is LYAQVSQSKP…FSQHNTIMDL (1178 aa). 3 disulfides stabilise this stretch: C63–C79, C81–C90, and C93–C119. N-linked (GlcNAc...) asparagine glycosylation occurs at N76. In terms of domain architecture, CUB spans 93–209; the sequence is CQGRFKLTEP…TGFNIFYSIN (117 aa). N174 and N198 each carry an N-linked (GlcNAc...) asparagine glycan. Residues 207–245 enclose the EGF-like 2 domain; the sequence is SINSCPNNCSGHGKCTTSVSVPSQVYCECDKYWKGEACD. Intrachain disulfides connect C211-C221, C215-C233, and C235-C244. Kelch repeat units follow at residues 316 to 365, 367 to 415, 427 to 475, 480 to 531, 533 to 591, and 592 to 638; these read FMWV…LYQE, IFMY…EGHS, VMII…SVYD, SIYV…LING, MLIF…VING, and SMYI…WNKN. N380 carries an N-linked (GlcNAc...) asparagine glycan. PSI domains lie at 614-657, 666-709, and 715-760; these read NCKA…AKCP, RCYR…TKCH, and ICNK…DACL. Positions 755–873 constitute a C-type lectin domain; that stretch reads IGDACLRVNS…TSMANGLVCE (119 aa). 3 N-linked (GlcNAc...) asparagine glycosylation sites follow: N763, N778, and N898. A disulfide bridge connects residues C776 and C872. PSI domains are found at residues 889–939 and 942–1012; these read PCSL…ATCS and NCSG…IQCP. 8 cysteine pairs are disulfide-bonded: C1014–C1022, C1016–C1028, C1031–C1040, C1043–C1057, C1060–C1069, C1062–C1076, C1078–C1088, and C1091–C1106. Laminin EGF-like domains are found at residues 1014 to 1059 and 1060 to 1108; these read CQCN…QCTA and CTCS…TCYY. N1157 carries an N-linked (GlcNAc...) asparagine glycan. Residues 1231-1251 traverse the membrane as a helical segment; that stretch reads VQFFVTFFSCFLSLLLVAAVV. Over 1252 to 1379 the chain is Cytoplasmic; the sequence is WKIKQTCWAS…HLSTRQGTCV (128 aa). The disordered stretch occupies residues 1354 to 1379; the sequence is KASDSKDKTSGVRNRKHLSTRQGTCV.

Interacts with MC4R.

The protein localises to the membrane. May play a role in melanocortin signaling pathways that regulate energy homeostasis. This chain is Attractin-like protein 1 (ATRNL1), found in Homo sapiens (Human).